A 218-amino-acid polypeptide reads, in one-letter code: Probable GTP-binding protein EngB (218 aa).

The 178-residue stretch at 23-200 folds into the EngB-type G domain; it reads EVPEIAFVGR…AQLLWQWAHP (178 aa). GTP contacts are provided by residues 31–38, 58–62, 80–83, 150–153, and 179–181; these read GRSNAGKS, GRTQH, DLPG, TKAD, and FSA. Mg(2+) is bound by residues S38 and T60.

Belongs to the TRAFAC class TrmE-Era-EngA-EngB-Septin-like GTPase superfamily. EngB GTPase family. The cofactor is Mg(2+).

Its function is as follows. Necessary for normal cell division and for the maintenance of normal septation. The polypeptide is Probable GTP-binding protein EngB (Acidovorax ebreus (strain TPSY) (Diaphorobacter sp. (strain TPSY))).